We begin with the raw amino-acid sequence, 560 residues long: 2-succinyl-5-enolpyruvyl-6-hydroxy-3-cyclohexene-1-carboxylate synthase (560 aa).

The protein belongs to the TPP enzyme family. MenD subfamily. As to quaternary structure, homodimer. Mg(2+) is required as a cofactor. The cofactor is Mn(2+). Thiamine diphosphate serves as cofactor.

It catalyses the reaction isochorismate + 2-oxoglutarate + H(+) = 5-enolpyruvoyl-6-hydroxy-2-succinyl-cyclohex-3-ene-1-carboxylate + CO2. Its pathway is quinol/quinone metabolism; 1,4-dihydroxy-2-naphthoate biosynthesis; 1,4-dihydroxy-2-naphthoate from chorismate: step 2/7. It participates in quinol/quinone metabolism; menaquinone biosynthesis. Catalyzes the thiamine diphosphate-dependent decarboxylation of 2-oxoglutarate and the subsequent addition of the resulting succinic semialdehyde-thiamine pyrophosphate anion to isochorismate to yield 2-succinyl-5-enolpyruvyl-6-hydroxy-3-cyclohexene-1-carboxylate (SEPHCHC). The sequence is that of 2-succinyl-5-enolpyruvyl-6-hydroxy-3-cyclohexene-1-carboxylate synthase from Pectobacterium atrosepticum (strain SCRI 1043 / ATCC BAA-672) (Erwinia carotovora subsp. atroseptica).